The chain runs to 647 residues: tRNA uridine 5-carboxymethylaminomethyl modification enzyme MnmG (647 aa).

Residues 22–27 (GAGHAG), Val134, and Ser189 contribute to the FAD site. 283 to 297 (GARYCPSIEDKIMRF) contacts NAD(+). Gln380 is a binding site for FAD.

The protein belongs to the MnmG family. In terms of assembly, homodimer. Heterotetramer of two MnmE and two MnmG subunits. The cofactor is FAD.

Its subcellular location is the cytoplasm. In terms of biological role, NAD-binding protein involved in the addition of a carboxymethylaminomethyl (cmnm) group at the wobble position (U34) of certain tRNAs, forming tRNA-cmnm(5)s(2)U34. This chain is tRNA uridine 5-carboxymethylaminomethyl modification enzyme MnmG, found in Desulfotalea psychrophila (strain LSv54 / DSM 12343).